The primary structure comprises 328 residues: UPF0194 membrane protein YPA_1093 (328 aa).

Residues 1-22 form the signal peptide; it reads MNRKKIIVAAVIVALLATLAYG. 2 coiled-coil regions span residues 80-109 and 141-209; these read YLNALKQAQANVQSAQAQLALLKAGYREEE and KAVS…ILLA.

It belongs to the UPF0194 family.

Its subcellular location is the periplasm. The polypeptide is UPF0194 membrane protein YPA_1093 (Yersinia pestis bv. Antiqua (strain Antiqua)).